The primary structure comprises 92 residues: Probable Fe(2+)-trafficking protein (92 aa).

Belongs to the Fe(2+)-trafficking protein family.

Functionally, could be a mediator in iron transactions between iron acquisition and iron-requiring processes, such as synthesis and/or repair of Fe-S clusters in biosynthetic enzymes. The protein is Probable Fe(2+)-trafficking protein of Xanthomonas oryzae pv. oryzae (strain MAFF 311018).